A 322-amino-acid chain; its full sequence is 4-hydroxythreonine-4-phosphate dehydrogenase (322 aa).

Threonine 132 contacts substrate. A divalent metal cation contacts are provided by histidine 160, histidine 205, and histidine 260. Lysine 268, asparagine 277, and arginine 286 together coordinate substrate.

It belongs to the PdxA family. Homodimer. The cofactor is Zn(2+). Mg(2+) serves as cofactor. Co(2+) is required as a cofactor.

The protein localises to the cytoplasm. It carries out the reaction 4-(phosphooxy)-L-threonine + NAD(+) = 3-amino-2-oxopropyl phosphate + CO2 + NADH. It participates in cofactor biosynthesis; pyridoxine 5'-phosphate biosynthesis; pyridoxine 5'-phosphate from D-erythrose 4-phosphate: step 4/5. Functionally, catalyzes the NAD(P)-dependent oxidation of 4-(phosphooxy)-L-threonine (HTP) into 2-amino-3-oxo-4-(phosphooxy)butyric acid which spontaneously decarboxylates to form 3-amino-2-oxopropyl phosphate (AHAP). This is 4-hydroxythreonine-4-phosphate dehydrogenase from Xanthomonas campestris pv. campestris (strain B100).